We begin with the raw amino-acid sequence, 803 residues long: Bromodomain-containing protein 2 (803 aa).

Met1 bears the N-acetylmethionine mark. The disordered stretch occupies residues 1–28 (MLQNVTPHSKLPGEGNAGLLGLGPEAAA). Residue Thr6 is modified to Phosphothreonine. A Phosphoserine modification is found at Ser37. The tract at residues 53–73 (ALQLTPANPPPPEVSNPKKPG) is disordered. Positions 74–180 (RVTNQLQYLH…KIFLQKVASM (107 aa)) constitute a Bromo 1 domain. Residues Asp112, Tyr155, Asn156, Lys157, Asp160, and Asp161 each coordinate a protein. 3 disordered regions span residues 268–349 (PPAQ…LSEQ), 456–653 (EPLE…RQLS), and 739–803 (EKRL…SDSG). The span at 285 to 298 (TTTPTPTAILAPGS) shows a compositional bias: low complexity. A phosphoserine mark is found at Ser298, Ser301, and Ser305. Residues 316–332 (MRRESGRPIKPPRKDLP) show a composition bias toward basic and acidic residues. Positions 344–453 (GKLSEQLKHC…DVFEFRYAKM (110 aa)) constitute a Bromo 2 domain. Residues 481–515 (SSEESSSESSSEEDEEEDEEEEEEEEESESSDSEE) are compositionally biased toward acidic residues. A compositionally biased stretch (basic residues) spans 545 to 567 (KPKRKREKKEKKKKRKAEKHRGR). The Nuclear localization signal motif lies at 556–560 (KKKRK). Residues 634-716 (DSEEEEESRP…SCLRKKPRKP (83 aa)) form the NET domain. Ser635 is subject to Phosphoserine. The span at 641–652 (SRPMSYDEKRQL) shows a compositional bias: basic and acidic residues. A compositionally biased stretch (low complexity) spans 777 to 797 (SASSSSSDSSSSSSSSSSSDT).

It belongs to the BET family. As to quaternary structure, homodimer. Interacts with E2F1. Interacts with (acetylated) STAT3; promoting STAT3 recruitment to chromatin. Interacts with CTCF; promoting BRD2 recruitment to chromatin.

It localises to the nucleus. The protein localises to the chromosome. Its function is as follows. Chromatin reader protein that specifically recognizes and binds histone H4 acetylated at 'Lys-5' and 'Lys-12' (H4K5ac and H4K12ac, respectively), thereby controlling gene expression and remodeling chromatin structures. Recruits transcription factors and coactivators to target gene sites, and activates RNA polymerase II machinery for transcriptional elongation. Plays a key role in genome compartmentalization via its association with CTCF and cohesin: recruited to chromatin by CTCF and promotes formation of topologically associating domains (TADs) via its ability to bind acetylated histones, contributing to CTCF boundary formation and enhancer insulation. Also recognizes and binds acetylated non-histone proteins, such as STAT3. Involved in inflammatory response by regulating differentiation of naive CD4(+) T-cells into T-helper Th17: recognizes and binds STAT3 acetylated at 'Lys-87', promoting STAT3 recruitment to chromatin. In addition to acetylated lysines, also recognizes and binds lysine residues on histones that are both methylated and acetylated on the same side chain to form N6-acetyl-N6-methyllysine (Kacme), an epigenetic mark of active chromatin associated with increased transcriptional initiation. Specifically binds histone H4 acetyl-methylated at 'Lys-5' and 'Lys-12' (H4K5acme and H4K12acme, respectively). This Canis lupus familiaris (Dog) protein is Bromodomain-containing protein 2 (BRD2).